Here is a 484-residue protein sequence, read N- to C-terminus: Putative cysteine ligase BshC (484 aa).

Positions 372-435 (RAFRDRVEGL…AARDEVLARH (64 aa)) form a coiled coil.

The protein belongs to the BshC family.

The protein is Putative cysteine ligase BshC of Thermus thermophilus (strain ATCC BAA-163 / DSM 7039 / HB27).